Consider the following 366-residue polypeptide: Hydroxyproline O-arabinosyltransferase 1 (366 aa).

A helical; Signal-anchor transmembrane segment spans residues 6 to 26; it reads TLFYPLLITLSVALITYNIII.

Ubiquitous.

It localises to the golgi apparatus. Its subcellular location is the cis-Golgi network membrane. It catalyses the reaction trans-4-hydroxy-L-prolyl-[protein] + UDP-beta-L-arabinofuranose = O-(beta-L-arabinofuranosyl)-trans-4-hydroxy-L-prolyl-[protein] + UDP + H(+). In terms of biological role, glycosyltransferase involved in the O-arabinosylation of several proteins including extensins and small signaling peptides. Catalyzes the transfer of the initial L-arabinose to the hydroxyl group of Hyp residues. Contributes redundantly with HPAT2 and HPAT3 to arabinosylation of EXT3. This chain is Hydroxyproline O-arabinosyltransferase 1, found in Arabidopsis thaliana (Mouse-ear cress).